An 83-amino-acid chain; its full sequence is MASKKIDRLSFDATLEELETIVHQLEQGSLPLEEALKQFEQGVHLVRAGQQKLEQAEQKIQILLTQADGTEQAVPFQPEQGEE.

The protein belongs to the XseB family. In terms of assembly, heterooligomer composed of large and small subunits.

Its subcellular location is the cytoplasm. It carries out the reaction Exonucleolytic cleavage in either 5'- to 3'- or 3'- to 5'-direction to yield nucleoside 5'-phosphates.. Bidirectionally degrades single-stranded DNA into large acid-insoluble oligonucleotides, which are then degraded further into small acid-soluble oligonucleotides. The polypeptide is Exodeoxyribonuclease 7 small subunit (Aeromonas salmonicida (strain A449)).